A 212-amino-acid polypeptide reads, in one-letter code: ATP-dependent Clp protease proteolytic subunit (212 aa).

The active-site Nucleophile is S114. The active site involves H139.

Belongs to the peptidase S14 family. Fourteen ClpP subunits assemble into 2 heptameric rings which stack back to back to give a disk-like structure with a central cavity, resembling the structure of eukaryotic proteasomes.

The protein resides in the cytoplasm. The enzyme catalyses Hydrolysis of proteins to small peptides in the presence of ATP and magnesium. alpha-casein is the usual test substrate. In the absence of ATP, only oligopeptides shorter than five residues are hydrolyzed (such as succinyl-Leu-Tyr-|-NHMec, and Leu-Tyr-Leu-|-Tyr-Trp, in which cleavage of the -Tyr-|-Leu- and -Tyr-|-Trp bonds also occurs).. Its function is as follows. Cleaves peptides in various proteins in a process that requires ATP hydrolysis. Has a chymotrypsin-like activity. Plays a major role in the degradation of misfolded proteins. This Azoarcus sp. (strain BH72) protein is ATP-dependent Clp protease proteolytic subunit.